A 343-amino-acid polypeptide reads, in one-letter code: N-acetyl-gamma-glutamyl-phosphate reductase (343 aa).

Cys-147 is an active-site residue.

It belongs to the NAGSA dehydrogenase family. Type 1 subfamily.

It localises to the cytoplasm. It carries out the reaction N-acetyl-L-glutamate 5-semialdehyde + phosphate + NADP(+) = N-acetyl-L-glutamyl 5-phosphate + NADPH + H(+). The protein operates within amino-acid biosynthesis; L-arginine biosynthesis; N(2)-acetyl-L-ornithine from L-glutamate: step 3/4. Functionally, catalyzes the NADPH-dependent reduction of N-acetyl-5-glutamyl phosphate to yield N-acetyl-L-glutamate 5-semialdehyde. The chain is N-acetyl-gamma-glutamyl-phosphate reductase from Staphylococcus aureus (strain USA300).